The sequence spans 556 residues: Formate--tetrahydrofolate ligase 1 (556 aa).

65-72 is a binding site for ATP; that stretch reads TPAGEGKT.

The protein belongs to the formate--tetrahydrofolate ligase family.

It catalyses the reaction (6S)-5,6,7,8-tetrahydrofolate + formate + ATP = (6R)-10-formyltetrahydrofolate + ADP + phosphate. It participates in one-carbon metabolism; tetrahydrofolate interconversion. The protein is Formate--tetrahydrofolate ligase 1 of Desulfitobacterium hafniense (strain Y51).